The following is a 62-amino-acid chain: Large ribosomal subunit protein bL28 (62 aa).

The disordered stretch occupies residues 1–28 (MARVCTITGRKARSGNSRSHAMNATKRK).

This sequence belongs to the bacterial ribosomal protein bL28 family.

The sequence is that of Large ribosomal subunit protein bL28 from Bacillus anthracis (strain CDC 684 / NRRL 3495).